The primary structure comprises 299 residues: MTLNLDEAKITAEVLTTALPYIQRFVDKIIVVKYGGNAMTDPALESSFARDIVLLKTVGMHPVVVHGGGPQVDNLLKELGRHSDRIDGMRVTDKDTMDIVEMVLGGNVNKSIVSLINKHGGCAIGLTGKDANLILAKKLMMEKIGVDGVAVPVDLGFVGDVVSVNKDVINMLIASDFIPVIAPLGVDEEGNTYNINADLVAGKVAEFLQAEKLMLLTNIKGVLGRDGEVVTGLTPKTVDSLIEDGTISGGMIPKIQCALDAVRSGVKSAVIVDGRVPHATLLEIFTNEGVGTLISRDLG.

Substrate contacts are provided by residues 68 to 69, R90, and N194; that span reads GG.

This sequence belongs to the acetylglutamate kinase family. ArgB subfamily.

Its subcellular location is the cytoplasm. It catalyses the reaction N-acetyl-L-glutamate + ATP = N-acetyl-L-glutamyl 5-phosphate + ADP. Its pathway is amino-acid biosynthesis; L-arginine biosynthesis; N(2)-acetyl-L-ornithine from L-glutamate: step 2/4. Its function is as follows. Catalyzes the ATP-dependent phosphorylation of N-acetyl-L-glutamate. The protein is Acetylglutamate kinase of Psychrobacter cryohalolentis (strain ATCC BAA-1226 / DSM 17306 / VKM B-2378 / K5).